The following is a 58-amino-acid chain: UPF0337 protein SAV_738 (58 aa).

Positions 1-58 (MAADEKAQANGEQAKGKVKKVVGGAAGNESLKGKGHAEESKGDLRAAKEKAKDAIKRK) are disordered. Basic and acidic residues predominate over residues 31-58 (LKGKGHAEESKGDLRAAKEKAKDAIKRK).

It belongs to the UPF0337 (CsbD) family.

The polypeptide is UPF0337 protein SAV_738 (Streptomyces avermitilis (strain ATCC 31267 / DSM 46492 / JCM 5070 / NBRC 14893 / NCIMB 12804 / NRRL 8165 / MA-4680)).